The sequence spans 334 residues: ATP-dependent kinase YFH7 (334 aa).

Gly30–Thr38 contributes to the ATP binding site.

The protein belongs to the YFH7 family.

ATP-dependent kinase that could be involved in endoplasmic reticulum membrane assembly. This Eremothecium gossypii (strain ATCC 10895 / CBS 109.51 / FGSC 9923 / NRRL Y-1056) (Yeast) protein is ATP-dependent kinase YFH7 (YFH7).